Reading from the N-terminus, the 189-residue chain is Probable nicotinate-nucleotide adenylyltransferase (189 aa).

Belongs to the NadD family.

It catalyses the reaction nicotinate beta-D-ribonucleotide + ATP + H(+) = deamido-NAD(+) + diphosphate. It participates in cofactor biosynthesis; NAD(+) biosynthesis; deamido-NAD(+) from nicotinate D-ribonucleotide: step 1/1. In terms of biological role, catalyzes the reversible adenylation of nicotinate mononucleotide (NaMN) to nicotinic acid adenine dinucleotide (NaAD). This Hydrogenobaculum sp. (strain Y04AAS1) protein is Probable nicotinate-nucleotide adenylyltransferase.